A 145-amino-acid chain; its full sequence is D-aminoacyl-tRNA deacylase (145 aa).

The Gly-cisPro motif, important for rejection of L-amino acids motif lies at Gly-137–Pro-138.

It belongs to the DTD family. In terms of assembly, homodimer.

The protein resides in the cytoplasm. It carries out the reaction glycyl-tRNA(Ala) + H2O = tRNA(Ala) + glycine + H(+). The enzyme catalyses a D-aminoacyl-tRNA + H2O = a tRNA + a D-alpha-amino acid + H(+). In terms of biological role, an aminoacyl-tRNA editing enzyme that deacylates mischarged D-aminoacyl-tRNAs. Also deacylates mischarged glycyl-tRNA(Ala), protecting cells against glycine mischarging by AlaRS. Acts via tRNA-based rather than protein-based catalysis; rejects L-amino acids rather than detecting D-amino acids in the active site. By recycling D-aminoacyl-tRNA to D-amino acids and free tRNA molecules, this enzyme counteracts the toxicity associated with the formation of D-aminoacyl-tRNA entities in vivo and helps enforce protein L-homochirality. This chain is D-aminoacyl-tRNA deacylase, found in Shewanella loihica (strain ATCC BAA-1088 / PV-4).